The sequence spans 256 residues: Neuroendocrine secretory protein 55 (256 aa).

The signal sequence occupies residues 1-46 (MDRRSRAHQWRRARHNYNDLCPPIGRRAATALLWLSCSIALLRALA). The tract at residues 61-256 (SFLNAHHRSA…RKGPIPIRRH (196 aa)) is disordered. A compositionally biased stretch (basic and acidic residues) spans 86-103 (ESDHEHEEAEPELARPEC). Composition is skewed to acidic residues over residues 104–139 (LEYDQDDYETETDSETEPESDIQSETEFETEPETEP) and 206–216 (LDEDPRDPEES). Positions 225 to 236 (QPRRCKTRRPAR) are enriched in basic residues.

This sequence belongs to the NESP55 family. Post-translationally, binds keratan sulfate chains. In terms of processing, may be proteolytically processed to give rise to a number of active peptides.

It is found in the cytoplasmic vesicle. The protein resides in the secretory vesicle. The protein localises to the synaptic vesicle. Its subcellular location is the secreted. This chain is Neuroendocrine secretory protein 55, found in Rattus norvegicus (Rat).